Reading from the N-terminus, the 840-residue chain is Wings apart-like protein 2 (840 aa).

Disordered stretches follow at residues 1–37 (MMERTYGRRKPGMLNDDVSRAEHIFPSSSSPELEPVD), 56–78 (SDNDFSEKRNKRPRNGGGGFGSN), and 532–594 (FDLE…DHHV). Residues 546–557 (KQKKSKGQKRKG) show a composition bias toward basic residues. Over residues 558–567 (SYRDKKDERS) the composition is skewed to basic and acidic residues. Polar residues predominate over residues 569-585 (QLFSSQEESNHGLNSQE). The 56-residue stretch at 764 to 819 (KEAEKMIVEAYSALLLAFLSTESRSIRNAIRDYLPKRDMAILVPVLDRFVAFHTTL) folds into the WAPL domain.

This sequence belongs to the WAPL family. As to quaternary structure, interacts with the cohesin complex throughout the cell cycle. As to expression, expressed in roots, leaves, buds and siliques.

Its subcellular location is the nucleus. It localises to the chromosome. Its function is as follows. Regulator of sister chromatid cohesion in meiosis which negatively regulates cohesin association with chromatin, acting as an antagonist of CTF7. Cohesion ensures that chromosome partitioning is accurate in both meiotic and mitotic cells and plays an important role in DNA repair. Essential for the prophase removal of cohesin during meiosis thus determining the timely release of meiotic cohesion. Important for proper spindle attachment and assembly during meiosis. Helps to prevent abnormal centromere association during prophase I in meiocytes. Required for early embryonic patterning. Also involved in chromosome segregation during mitosis. In Arabidopsis thaliana (Mouse-ear cress), this protein is Wings apart-like protein 2.